Consider the following 387-residue polypeptide: DNA-damage-repair/toleration protein 111 (387 aa).

Positions 1 to 213 (MLGGLYGDLP…TSGLGVGAGG (213 aa)) are disordered. Residues 19 to 29 (SGNSSSVWSSS) are compositionally biased toward low complexity. Positions 103–158 (DPARPNDYEEYKREKKRKATEAEMKREMDKRRQEDEERDKREREEREKERERDNSD) are enriched in basic and acidic residues. One can recognise a G-patch domain in the interval 214-260 (QMTAAQRMMAKMGWKQGQGLGKSEQGITTPLMAKKTDRRAGVIVNAS). In terms of domain architecture, RRM spans 283-369 (RVLLLRNMVG…RTVRATFYDE (87 aa)).

Component of the SWAP1-SFPS-RRC1 splicing factor complex which modulates pre-mRNA splicing to promote photomorphogenesis. Interacts with SWAP1 in a light-independent manner. Associates with the photoreceptor phytochrome B (phyB) in nuclear photobodies upon response to red light. Binds to the splicing factor 1 SF1, involved in 3' splicing site recognition. In terms of tissue distribution, expressed ubiquitously with highest levels in dry seeds and in cells surrounding the base of trichomes and guard cells.

It localises to the nucleus. The protein resides in the nucleus speckle. Its function is as follows. As a member of the SWAP1-SFPS-RRC1 splicing factor complex, modulates photomorphogenesis by regulating the gene expression and pre-messenger RNA (mRNA) alternative splicing of a large number of genes, including those involved in plant responses to light signaling, probably by helping in the 3' splice site determination. Associates with and regulates EARLY FLOWERING 3 (ELF3) mRNA processing, a key component of the circadian clock also involved in photomorphogenesis. Required for light-regulated (red, far-red and blue lights) photomorphogenesis in a PHYB- and PHYTOCHROME INTERACTING FACTORS- (PIFs) dependent manner. Promotes flowering under both short (SD) and long days (LD). Controls abscisic acid (ABA) sensitivity during seed development, stomatal responsiveness and germination by monitoring ABI3 splicing, upstream of the splicing factor SUPPRESSOR OF ABI3-ABI5. Seems to be involved in the resistance to UV light and chemical DNA-damaging agents. The sequence is that of DNA-damage-repair/toleration protein 111 from Arabidopsis thaliana (Mouse-ear cress).